A 263-amino-acid chain; its full sequence is 3-oxo-5-alpha-steroid 4-dehydrogenase 1 (263 aa).

Helical transmembrane passes span 16–33 (MLAALAYLQCAVGCAVLA), 90–110 (ILLAMFLVHYGHRCLIYPFLM), 115–135 (PMPLLACTMAIMFCTFNGYLQ), 155–175 (FLIGFGLWLAGMLINIHSDHI), and 213–233 (YALASWSVQGAAFAFFTFCFL).

It belongs to the steroid 5-alpha reductase family.

Its subcellular location is the microsome membrane. It localises to the endoplasmic reticulum membrane. It catalyses the reaction a 3-oxo-5alpha-steroid + NADP(+) = a 3-oxo-Delta(4)-steroid + NADPH + H(+). The enzyme catalyses 5alpha-pregnane-3,20-dione + NADP(+) = progesterone + NADPH + H(+). The catalysed reaction is 17beta-hydroxy-5alpha-androstan-3-one + NADP(+) = testosterone + NADPH + H(+). It carries out the reaction androst-4-ene-3,17-dione + NADPH + H(+) = 5alpha-androstan-3,17-dione + NADP(+). Its function is as follows. Converts testosterone into 5-alpha-dihydrotestosterone and progesterone or corticosterone into their corresponding 5-alpha-3-oxosteroids. It plays a central role in sexual differentiation and androgen physiology. This is 3-oxo-5-alpha-steroid 4-dehydrogenase 1 (SRD5A1) from Macaca fascicularis (Crab-eating macaque).